The primary structure comprises 81 residues: uncharacterized protein (81 aa).

The signal sequence occupies residues Met-1–Ala-22. Residues His-29–Lys-81 are disordered. A compositionally biased stretch (low complexity) spans Ser-30–Gly-58. Over residues Ser-59–Ser-75 the composition is skewed to gly residues.

It is found in the secreted. This is an uncharacterized protein from Dictyostelium discoideum (Social amoeba).